Here is a 245-residue protein sequence, read N- to C-terminus: 5-oxoprolinase subunit A (245 aa).

This sequence belongs to the LamB/PxpA family. In terms of assembly, forms a complex composed of PxpA, PxpB and PxpC.

The enzyme catalyses 5-oxo-L-proline + ATP + 2 H2O = L-glutamate + ADP + phosphate + H(+). Functionally, catalyzes the cleavage of 5-oxoproline to form L-glutamate coupled to the hydrolysis of ATP to ADP and inorganic phosphate. The protein is 5-oxoprolinase subunit A of Neisseria meningitidis serogroup C (strain 053442).